The sequence spans 116 residues: Methionine-R-sulfoxide reductase B1 (116 aa).

The region spanning 1-106 (MSFCSFFGGE…FSSSLKFVPK (106 aa)) is the MsrB domain. The Zn(2+) site is built by cysteine 23, cysteine 26, cysteine 71, and cysteine 74. Residue selenocysteine 95 is the Nucleophile of the active site. Selenocysteine 95 is a non-standard amino acid (selenocysteine).

This sequence belongs to the MsrB Met sulfoxide reductase family. The cofactor is Zn(2+). Truncated MSRB1/SEPX1 proteins produced by failed UGA/Sec decoding are ubiquitinated by some Cul2-RING E3 ubiquitin-protein ligase complexes (containing either PRAME, PRAMF6, PRAMF9 or FEM1C as substrate-recognition component).

It is found in the cytoplasm. Its subcellular location is the nucleus. The protein resides in the cytoskeleton. It carries out the reaction L-methionyl-[protein] + [thioredoxin]-disulfide + H2O = L-methionyl-(R)-S-oxide-[protein] + [thioredoxin]-dithiol. The catalysed reaction is [thioredoxin]-disulfide + L-methionine + H2O = L-methionine (R)-S-oxide + [thioredoxin]-dithiol. Functionally, methionine-sulfoxide reductase that specifically reduces methionine (R)-sulfoxide back to methionine. While in many cases, methionine oxidation is the result of random oxidation following oxidative stress, methionine oxidation is also a post-translational modification that takes place on specific residue. Acts as a regulator of actin assembly by reducing methionine (R)-sulfoxide mediated by MICALs (MICAL1, MICAL2 or MICAL3) on actin, thereby promoting filament repolymerization. Plays a role in innate immunity by reducing oxidized actin, leading to actin repolymerization in macrophages. This is Methionine-R-sulfoxide reductase B1 (MSRB1) from Homo sapiens (Human).